A 96-amino-acid chain; its full sequence is Non-specific lipid-transfer protein 2G (96 aa).

The N-terminal stretch at 1–29 is a signal peptide; the sequence is MAGMMKKQVVTALMLALVVLAAAPGGARA. Disulfide bonds link Cys-31–Cys-63, Cys-39–Cys-53, Cys-54–Cys-89, and Cys-65–Cys-96.

The protein resides in the secreted. It localises to the cell wall. In terms of biological role, transfer lipids across membranes. May play a role in plant defense or in the biosynthesis of cuticle layers. The chain is Non-specific lipid-transfer protein 2G from Triticum aestivum (Wheat).